Here is a 433-residue protein sequence, read N- to C-terminus: Probable glycine dehydrogenase (decarboxylating) subunit 1 (433 aa).

Belongs to the GcvP family. N-terminal subunit subfamily. The glycine cleavage system is composed of four proteins: P, T, L and H. In this organism, the P 'protein' is a heterodimer of two subunits.

It carries out the reaction N(6)-[(R)-lipoyl]-L-lysyl-[glycine-cleavage complex H protein] + glycine + H(+) = N(6)-[(R)-S(8)-aminomethyldihydrolipoyl]-L-lysyl-[glycine-cleavage complex H protein] + CO2. Its function is as follows. The glycine cleavage system catalyzes the degradation of glycine. The P protein binds the alpha-amino group of glycine through its pyridoxal phosphate cofactor; CO(2) is released and the remaining methylamine moiety is then transferred to the lipoamide cofactor of the H protein. This chain is Probable glycine dehydrogenase (decarboxylating) subunit 1, found in Thermoplasma acidophilum (strain ATCC 25905 / DSM 1728 / JCM 9062 / NBRC 15155 / AMRC-C165).